We begin with the raw amino-acid sequence, 826 residues long: Sister chromatid cohesion protein PDS5 homolog D (826 aa).

5 HEAT repeats span residues 18–54 (GTNL…LSMQ), 55–94 (SALI…ITAP), 151–188 (DLIL…DETE), 189–226 (QVST…RCAR), and 230–267 (PYII…HSPV). Disordered regions lie at residues 261–551 (PKVH…EVES) and 640–826 (KKSK…KRKS). Basic and acidic residues-rich tracts occupy residues 269–286 (TKEH…KENL) and 296–309 (RHET…EKVR). A Nuclear localization signal 1 motif is present at residues 281 to 288 (SRKENLSK). The span at 311–323 (GNKSSLLKQSLKQ) shows a compositional bias: polar residues. The Nuclear localization signal 2 motif lies at 357–364 (GKRDPLKT). Positions 396–408 (SPATSSRSLTGSL) are enriched in polar residues. The stretch at 424-461 (SLSSPRLKKLASCFRDEEPNQEDDRKIGNSSKQTRSKN) is one HEAT 6 repeat. A compositionally biased stretch (basic and acidic residues) spans 437–450 (FRDEEPNQEDDRKI). A compositionally biased stretch (polar residues) spans 451-460 (GNSSKQTRSK). The span at 644–663 (NVAVSVEPTSSSGVRSSSRT) shows a compositional bias: low complexity. Residues 665-701 (MKKDCGKRLNKQVEKTREGKNLRSLKELNAETDRTAE) are compositionally biased toward basic and acidic residues. A compositionally biased stretch (acidic residues) spans 702–724 (EQEVSLEAESDDRSEEQEYEDDC). Residues 725 to 746 (SDKKEQSQDKGVEAETKEEEKQ) are compositionally biased toward basic and acidic residues. Acidic residues-rich tracts occupy residues 752–763 (GESEGEDSESEE), 771–800 (DDME…EVDD), and 811–826 (EKEE…KRKS). The stretch at 770–825 (TDDMEDDEEEEEEEIDHMEDEAEEEKEEVDDKEASANMSEIEKEEEEEEEDEEKRK) forms a coiled coil.

Belongs to the PDS5 family. Interacts with the cohesin complex.

It is found in the nucleus. Functionally, cohesin cofactor dispensable during the meiotic division but playing an important role in DNA repair by homologous recombination (HR) probably by helping SMC5/SMC6 complex. Regulator of sister chromatid cohesion in mitosis which may stabilize cohesin complex association with chromatin. May couple sister chromatid cohesion during mitosis to DNA replication. Cohesion ensures that chromosome partitioning is accurate in both meiotic and mitotic cells and plays an important role in DNA repair. The polypeptide is Sister chromatid cohesion protein PDS5 homolog D (Arabidopsis thaliana (Mouse-ear cress)).